Consider the following 1100-residue polypeptide: Collagen alpha-2(I) chain (1100 aa).

Residues 1-982 (QYDGVKAPDP…PGPAGGGYDV (982 aa)) are disordered. Low complexity-rich tracts occupy residues 122–170 (EPGA…AAGP), 200–209 (EPGPNGAVGP), and 216–237 (PGNNGLNGAKGAAGTPGVAGAP). Pro residues predominate over residues 239-249 (FPGPRGGPGPQ). Residues 251-261 (PQGAAGQRGLA) are compositionally biased toward low complexity. Positions 268–277 (GVKGDGGPKG) are enriched in gly residues. 4 stretches are compositionally biased toward low complexity: residues 333–352 (MPGARGASGAAGPRGPPGDA), 358–385 (SGPAGLRGLPGSPGSSGPPGKEGAAGPA), 435–448 (APGPDGNNGATGAT), and 460–472 (QGASGAPGFQGLP). Residues 473–482 (GPAGGAGEAG) show a composition bias toward gly residues. The span at 507 to 517 (NPGAAGASGPQ) shows a compositional bias: low complexity. The span at 530–557 (GTDGGKGEPGAAGAAGGPGHQGPGGMPG) shows a compositional bias: gly residues. The span at 568 to 579 (KGEKGEGGHRGP) shows a compositional bias: basic and acidic residues. Residues 633–646 (PAGAPGFAGPPGAD) show a composition bias toward low complexity. Over residues 656–665 (GPSGGKGESG) the composition is skewed to gly residues. 3 stretches are compositionally biased toward low complexity: residues 666–691 (PSGPAGPAGQSGPPGASGPAGPTGAR), 702–729 (FPGAAGRVGAAGPAGLVGPPGAAGPAGK), and 757–775 (SGEKGXPGTPGTSGPLGLQ). Residues 788–797 (GSPGGAGAVG) are compositionally biased toward gly residues. Low complexity-rich tracts occupy residues 798-820 (EAGRVGPAGPAGARGAPGNLGLP) and 854-866 (AGPTGAAGRPGNR). Gly residues predominate over residues 867–876 (GESGPGGAAG). Low complexity predominate over residues 877 to 892 (AVGPAGARGAAGPSGP). Residues 893–907 (RGEKGVAGEKGERGM) are compositionally biased toward basic and acidic residues. Positions 916–935 (LQGMPGPSGPSGDTGSAGPN) are enriched in low complexity. The Fibrillar collagen NC1 domain occupies 1071-1100 (TRLPLLDLAPLDLGGADQEFGLDLGPVCFK).

Belongs to the fibrillar collagen family.

The protein resides in the secreted. The protein localises to the extracellular space. It is found in the extracellular matrix. The sequence is that of Collagen alpha-2(I) chain from Epinephelus caninus (Dogtooth grouper).